Here is a 91-residue protein sequence, read N- to C-terminus: Beta-microseminoprotein (91 aa).

5 cysteine pairs are disulfide-bonded: cysteine 2–cysteine 54, cysteine 22–cysteine 46, cysteine 41–cysteine 75, cysteine 44–cysteine 53, and cysteine 68–cysteine 88.

As to expression, expressed in ciliated epithelium of nidamental gland and in secretory-like cells in accessory nidamental gland (at protein level). Expressed in ovary, nidamental gland and accessory nidamental gland.

The protein resides in the secreted. Its function is as follows. Acts as a pheromone. Triggers aggressive behaviors in males such as fin beating, lunging and grabbing. These behaviors form part of the competition for fertile females. This chain is Beta-microseminoprotein, found in Doryteuthis pealeii (Longfin inshore squid).